We begin with the raw amino-acid sequence, 336 residues long: tRNA N6-adenosine threonylcarbamoyltransferase (336 aa).

Positions 114 and 118 each coordinate Fe cation. Residues 136 to 140 (LVSGG), aspartate 169, glycine 182, aspartate 186, and asparagine 275 each bind substrate. Position 302 (aspartate 302) interacts with Fe cation.

It belongs to the KAE1 / TsaD family. The cofactor is Fe(2+).

The protein resides in the cytoplasm. The catalysed reaction is L-threonylcarbamoyladenylate + adenosine(37) in tRNA = N(6)-L-threonylcarbamoyladenosine(37) in tRNA + AMP + H(+). Its function is as follows. Required for the formation of a threonylcarbamoyl group on adenosine at position 37 (t(6)A37) in tRNAs that read codons beginning with adenine. Is involved in the transfer of the threonylcarbamoyl moiety of threonylcarbamoyl-AMP (TC-AMP) to the N6 group of A37, together with TsaE and TsaB. TsaD likely plays a direct catalytic role in this reaction. This is tRNA N6-adenosine threonylcarbamoyltransferase from Streptococcus agalactiae serotype III (strain NEM316).